A 618-amino-acid polypeptide reads, in one-letter code: DNA mismatch repair protein MutL (618 aa).

The segment covering 367–381 has biased composition (low complexity); it reads EPTAAREPATPRYSG. The interval 367–402 is disordered; the sequence is EPTAAREPATPRYSGGASGGNGGRQSAGGWPHAQPG. A compositionally biased stretch (gly residues) spans 382 to 392; sequence GASGGNGGRQS.

The protein belongs to the DNA mismatch repair MutL/HexB family.

Its function is as follows. This protein is involved in the repair of mismatches in DNA. It is required for dam-dependent methyl-directed DNA mismatch repair. May act as a 'molecular matchmaker', a protein that promotes the formation of a stable complex between two or more DNA-binding proteins in an ATP-dependent manner without itself being part of a final effector complex. The polypeptide is DNA mismatch repair protein MutL (Salmonella dublin (strain CT_02021853)).